We begin with the raw amino-acid sequence, 301 residues long: Probable 2-dehydro-3-deoxy-D-pentonate aldolase YjhH (301 aa).

Residues T46 and Y109 each act as charge relay system in the active site. Y135 acts as the Proton donor in catalysis. The active-site Schiff-base intermediate with substrate is K164.

The protein belongs to the DapA family.

It is found in the cytoplasm. The catalysed reaction is 2-dehydro-3-deoxy-D-arabinonate = glycolaldehyde + pyruvate. Functions as a 2-dehydro-3-deoxy-D-pentonate aldolase. The sequence is that of Probable 2-dehydro-3-deoxy-D-pentonate aldolase YjhH (yjhH) from Escherichia coli (strain K12).